The chain runs to 1372 residues: DNA-directed RNA polymerase subunit beta (1372 aa).

It belongs to the RNA polymerase beta chain family. In terms of assembly, the RNAP catalytic core consists of 2 alpha, 1 beta, 1 beta' and 1 omega subunit. When a sigma factor is associated with the core the holoenzyme is formed, which can initiate transcription.

The catalysed reaction is RNA(n) + a ribonucleoside 5'-triphosphate = RNA(n+1) + diphosphate. Functionally, DNA-dependent RNA polymerase catalyzes the transcription of DNA into RNA using the four ribonucleoside triphosphates as substrates. The chain is DNA-directed RNA polymerase subunit beta from Psychrobacter cryohalolentis (strain ATCC BAA-1226 / DSM 17306 / VKM B-2378 / K5).